The primary structure comprises 215 residues: Probable nicotinate-nucleotide adenylyltransferase (215 aa).

The protein belongs to the NadD family.

The enzyme catalyses nicotinate beta-D-ribonucleotide + ATP + H(+) = deamido-NAD(+) + diphosphate. It participates in cofactor biosynthesis; NAD(+) biosynthesis; deamido-NAD(+) from nicotinate D-ribonucleotide: step 1/1. Its function is as follows. Catalyzes the reversible adenylation of nicotinate mononucleotide (NaMN) to nicotinic acid adenine dinucleotide (NaAD). In Coxiella burnetii (strain RSA 331 / Henzerling II), this protein is Probable nicotinate-nucleotide adenylyltransferase.